A 421-amino-acid chain; its full sequence is 4-hydroxy-3-methylbut-2-en-1-yl diphosphate synthase (flavodoxin) (421 aa).

Residues Cys298, Cys301, Cys344, and Glu351 each coordinate [4Fe-4S] cluster.

It belongs to the IspG family. It depends on [4Fe-4S] cluster as a cofactor.

The catalysed reaction is (2E)-4-hydroxy-3-methylbut-2-enyl diphosphate + oxidized [flavodoxin] + H2O + 2 H(+) = 2-C-methyl-D-erythritol 2,4-cyclic diphosphate + reduced [flavodoxin]. Its pathway is isoprenoid biosynthesis; isopentenyl diphosphate biosynthesis via DXP pathway; isopentenyl diphosphate from 1-deoxy-D-xylulose 5-phosphate: step 5/6. In terms of biological role, converts 2C-methyl-D-erythritol 2,4-cyclodiphosphate (ME-2,4cPP) into 1-hydroxy-2-methyl-2-(E)-butenyl 4-diphosphate. This is 4-hydroxy-3-methylbut-2-en-1-yl diphosphate synthase (flavodoxin) from Neisseria meningitidis serogroup C / serotype 2a (strain ATCC 700532 / DSM 15464 / FAM18).